A 258-amino-acid chain; its full sequence is Acetylglutamate kinase (258 aa).

Residues 44–45 (GG), Arg66, and Asn158 contribute to the substrate site. Residues 181–186 (DVSGIL) and 209–211 (IIT) contribute to the ATP site.

The protein belongs to the acetylglutamate kinase family. ArgB subfamily. As to quaternary structure, homodimer.

The protein resides in the cytoplasm. The catalysed reaction is N-acetyl-L-glutamate + ATP = N-acetyl-L-glutamyl 5-phosphate + ADP. It functions in the pathway amino-acid biosynthesis; L-arginine biosynthesis; N(2)-acetyl-L-ornithine from L-glutamate: step 2/4. Its function is as follows. Catalyzes the ATP-dependent phosphorylation of N-acetyl-L-glutamate. The sequence is that of Acetylglutamate kinase from Yersinia pestis bv. Antiqua (strain Antiqua).